We begin with the raw amino-acid sequence, 1342 residues long: MVYSYTEKKRIRKDFGKRDQVLDTPYLLSIQLDSFKQFIEADPEGEYGLEAAFRSVFPITSYSGSAELQYVSYRLGEPVFDVKECQIRGVTYSAPLRVKLRMVLYDREAAAGTVKDIKEQEVYMGEIPLMTENGTFVINGTERVIVSQLHRSPGVFFDHDKGKTHSSGKVLYNARVIPYRGSWLDFEFDAKDNLFVRIDRRRKLPASIILRALDFSSEQILATFFETIGFEVKDGKLMMDLVPERLRGETATFDIVANGAVVVETGRRVTARHIRQLEKDSVTQIEVPVEYVVGKVAAKDYAHPQTGEMVVTANQALSLEAVANLSQAGFKHFEVLFTNELDHGAYMSETLRIDSSSSRLEALVEIYRMMRPGEPPTREAAEQLFENLFFSSERYDLSTVGRMKFNRRLAREDETGVGTLTKDDIVDVMKRLIDIRNGNDEVDDIDHLGNRRIRSVGEMAENQFRVGLVRVERAVKERLSLGDLDTLMPQDLINAKPISAAVKEFFGSSQLSQFMDQNNPLSEVTHKRRISALGPGGLTRERAGFEVRDVHPTHYGRLCPIETPEGPNIGLINSLSVYSRTNEYGFLETPYRKVIDGVITDEVDYLSAIEEGKYVIAQANAATTEDGRLKDELIPCRHKGESTFMNADQIQYMDVSPQQIVSVAAALIPFLEHDDANRALMGSNMQRQAVPTLRADKPLVGTGMERAVAVDSGVTVVAKRGGMIDYVDASRIVIKVNEDELLPGEAGIDIYSLTKYTRSNQNTCINQRPCVMLGEPVMAGDVLADGPSTDLGELALGQNLRVAFMPWNGYNFEDSILVNERVVQEDRLTTIHIQELACISRDTKLGPEEITADIPNVGEAALSKLDESGIVYVGAEVKGGDILVGKVTPKGETQLTPEEKLLRAIFGEKASDVKDSSLRVPNGVYGTVVDVQVFTRDGVEKDKRAKEIEEMQLKEAKKDLTEEFKILEDGIFGRSRNLLLAAGYSEDRLNKLDRSKWFELAIEDEAKQIELEQIAEQHVELKAEFDKKFENKRRKIIQGDDLAPGVLKIVKVYLAVKRRIQPGDKMAGRHGNKGVISKICPVEDMPHDEYGRPVDIVLNPLGVPSRMNIGQILEVHLGLAAKGIGEKIDRMVKEQRELHEMRDFLQQVYDLGEKDTQQVNVAELSDDDVRTLVGNLRKGLPVATPVFDGAKEREIKALLKLADLPESGQIALFDGRTGNAFERKVTVGYMYMLKLNHLVDDKMHARSTGSYSLVTQQPLGGKAQFGGQRFGEMEVWALEAYGAAYTLQEMLTVKSDDVNGRTKMYKNIVDGDHRMEPGMPESFNVLLKEIRSLGINIELDEE.

It belongs to the RNA polymerase beta chain family. As to quaternary structure, the RNAP catalytic core consists of 2 alpha, 1 beta, 1 beta' and 1 omega subunit. When a sigma factor is associated with the core the holoenzyme is formed, which can initiate transcription.

The catalysed reaction is RNA(n) + a ribonucleoside 5'-triphosphate = RNA(n+1) + diphosphate. Its function is as follows. DNA-dependent RNA polymerase catalyzes the transcription of DNA into RNA using the four ribonucleoside triphosphates as substrates. In Aeromonas hydrophila subsp. hydrophila (strain ATCC 7966 / DSM 30187 / BCRC 13018 / CCUG 14551 / JCM 1027 / KCTC 2358 / NCIMB 9240 / NCTC 8049), this protein is DNA-directed RNA polymerase subunit beta.